The chain runs to 103 residues: Eukaryotic translation initiation factor 4E-1A-binding protein homolog (103 aa).

Residues Asn-49–Glu-103 are disordered. The segment covering Thr-76–Lys-92 has biased composition (low complexity).

The protein belongs to the eIF4E-binding protein family.

Its function is as follows. Regulates assembly of the eIF4F complex. This chain is Eukaryotic translation initiation factor 4E-1A-binding protein homolog (febA), found in Dictyostelium discoideum (Social amoeba).